Here is a 355-residue protein sequence, read N- to C-terminus: Phenylalanine--tRNA ligase alpha subunit (355 aa).

Residue glutamate 273 coordinates Mg(2+).

Belongs to the class-II aminoacyl-tRNA synthetase family. Phe-tRNA synthetase alpha subunit type 1 subfamily. Tetramer of two alpha and two beta subunits. Requires Mg(2+) as cofactor.

It is found in the cytoplasm. It carries out the reaction tRNA(Phe) + L-phenylalanine + ATP = L-phenylalanyl-tRNA(Phe) + AMP + diphosphate + H(+). This chain is Phenylalanine--tRNA ligase alpha subunit, found in Bifidobacterium adolescentis (strain ATCC 15703 / DSM 20083 / NCTC 11814 / E194a).